The sequence spans 102 residues: Large ribosomal subunit protein bL21 (102 aa).

This sequence belongs to the bacterial ribosomal protein bL21 family. In terms of assembly, part of the 50S ribosomal subunit. Contacts protein L20.

This protein binds to 23S rRNA in the presence of protein L20. In Oleidesulfovibrio alaskensis (strain ATCC BAA-1058 / DSM 17464 / G20) (Desulfovibrio alaskensis), this protein is Large ribosomal subunit protein bL21.